We begin with the raw amino-acid sequence, 454 residues long: G-protein coupled receptor 39 (454 aa).

Topologically, residues 1–34 (MASPSHPSRDCSQVIDHSHVPEFEVATWIKITLI) are extracellular. 2 disulfide bridges follow: cysteine 11–cysteine 191 and cysteine 108–cysteine 210. Zn(2+) contacts are provided by histidine 17 and histidine 19. Residues 35-55 (LVYLVIFVVGILGNSVTIRVT) traverse the membrane as a helical segment. Over 56-69 (QVLQKKGYLQKEVT) the chain is Cytoplasmic. The chain crosses the membrane as a helical span at residues 70 to 89 (DHMVSLACSDILVFLIGMPM). Residues 90–109 (EFYSIIWNPLTTPSYTVSCK) lie on the Extracellular side of the membrane. Residues 110-131 (VHTFLFEACSYATLLHVLTLSF) traverse the membrane as a helical segment. Topologically, residues 132-151 (ERYIAICHPFRYKAMSGPCQ) are cytoplasmic. The helical transmembrane segment at 152–172 (VKLLIGFVWVTSALVALPLLF) threads the bilayer. Over 173–217 (AMGVEYPLVNVPSHRGLICNRSRTRHQEQPESSNMSICTNLSSRW) the chain is Extracellular. Residues asparagine 192, asparagine 206, and asparagine 212 are each glycosylated (N-linked (GlcNAc...) asparagine). Residues 218–242 (TVFQSSIFSAFVVYLVVLVSVAFMC) form a helical membrane-spanning segment. Residues 243-283 (WSMMQVLRRSKQGTLAAQGQQLQLRKLESQESRSARRQTII) lie on the Cytoplasmic side of the membrane. Residues 284 to 305 (FLELIVVTLAVCWMPNQVRRIM) traverse the membrane as a helical segment. The Extracellular segment spans residues 306–323 (AAAKPKHDWTKSYFRAYM). The helical transmembrane segment at 324-344 (ILLPFSDTFFYLSSVVNPLLY) threads the bilayer. At 345–454 (NVSSQQFRSV…TRNGFQEHEV (110 aa)) the chain is on the cytoplasmic side. Serine 397 carries the phosphoserine modification. Positions 415–454 (HSEAKPESKPQELSCESPEPNSERKPANPATRNGFQEHEV) are disordered.

The protein belongs to the G-protein coupled receptor 1 family. Interacts with HTR1A. Interacts with GALR1. In terms of tissue distribution, detected in liver, kidney, abomasum, uterus, small intestine and colon.

It is found in the cell membrane. Functionally, zinc-sensing receptor that can sense changes in extracellular Zn(2+), mediate Zn(2+) signal transmission, and participates in the regulation of numerous physiological processes including glucose homeostasis regulation, gastrointestinal mobility, hormone secretion and cell death. Activation by Zn(2+) in keratinocytes increases the intracellular concentration of Ca(2+) and activates the ERK/MAPK and PI3K/AKT signaling pathways leading to epithelial repair. Plays an essential role in normal wound healing by inducing the production of cytokines including the major inflammatory cytokine IL6 via the PKC/MAPK/CEBPB pathway. Regulates adipose tissue metabolism, especially lipolysis, and regulates the function of lipases, such as hormone-sensitive lipase and adipose triglyceride lipase. Plays a role in the inhibition of cell death and protects against oxidative, endoplasmic reticulum and mitochondrial stress by inducing secretion of the cytoprotective pigment epithelium-derived growth factor (PEDF) and probably other protective transcripts in a GNA13/RHOA/SRE-dependent manner. Forms dynamic heteroreceptor complexes with HTR1A and GALR1 depending on cell type or specific physiological states, resulting in signaling diversity: HTR1A-GPR39 shows additive increase in signaling along the serum response element (SRE) and NF-kappa-B pathways while GALR1 acts as an antagonist blocking SRE. This chain is G-protein coupled receptor 39 (GPR39), found in Bos taurus (Bovine).